A 437-amino-acid chain; its full sequence is Adenylyltransferase and sulfurtransferase MOCS3 (437 aa).

ATP contacts are provided by residues G82, D103, 110 to 114 (TNLHR), K127, and 171 to 172 (DN). Zn(2+)-binding residues include C212 and C215. The Glycyl thioester intermediate; for adenylyltransferase activity role is filled by C229. Zn(2+)-binding residues include C287 and C290. The region spanning 337–435 (SNVPHLLVDV…WTHNIDPEFP (99 aa)) is the Rhodanese domain. C391 serves as the catalytic Cysteine persulfide intermediate; for sulfurtransferase activity.

In the N-terminal section; belongs to the HesA/MoeB/ThiF family. UBA4 subfamily. It depends on Zn(2+) as a cofactor.

It is found in the cytoplasm. The protein localises to the cytosol. It carries out the reaction [molybdopterin-synthase sulfur-carrier protein]-C-terminal Gly-Gly + ATP + H(+) = [molybdopterin-synthase sulfur-carrier protein]-C-terminal Gly-Gly-AMP + diphosphate. It catalyses the reaction [molybdopterin-synthase sulfur-carrier protein]-C-terminal Gly-Gly-AMP + S-sulfanyl-L-cysteinyl-[cysteine desulfurase] + AH2 = [molybdopterin-synthase sulfur-carrier protein]-C-terminal-Gly-aminoethanethioate + L-cysteinyl-[cysteine desulfurase] + A + AMP + 2 H(+). It participates in tRNA modification; 5-methoxycarbonylmethyl-2-thiouridine-tRNA biosynthesis. It functions in the pathway cofactor biosynthesis; molybdopterin biosynthesis. In terms of biological role, plays a central role in 2-thiolation of mcm(5)S(2)U at tRNA wobble positions of cytosolic tRNA(Lys), tRNA(Glu) and tRNA(Gln). Also essential during biosynthesis of the molybdenum cofactor. Acts by mediating the C-terminal thiocarboxylation of sulfur carriers URM1 and MOCS2A. Its N-terminus first activates URM1 and MOCS2A as acyl-adenylates (-COAMP), then the persulfide sulfur on the catalytic cysteine is transferred to URM1 and MOCS2A to form thiocarboxylation (-COSH) of their C-terminus. The reaction probably involves hydrogen sulfide that is generated from the persulfide intermediate and that acts as a nucleophile towards URM1 and MOCS2A. Subsequently, a transient disulfide bond is formed. Does not use thiosulfate as sulfur donor; NFS1 probably acting as a sulfur donor for thiocarboxylation reactions. In Aedes aegypti (Yellowfever mosquito), this protein is Adenylyltransferase and sulfurtransferase MOCS3.